We begin with the raw amino-acid sequence, 182 residues long: UPF0397 protein BCG9842_B2659 (182 aa).

Helical transmembrane passes span 9–29 (VVAIGIGAALYGILGLWGFSI), 40–60 (AILTVFGALFGPVAGLLIGLI), 71–91 (WGIWWGWVISSGIIGFSMGLI), 114–134 (ITGLVGIVIAIIFAGAFDIIV), and 142–162 (IVIQVLGATISDVIVFLVLGL).

The protein belongs to the UPF0397 family.

It is found in the cell membrane. The protein is UPF0397 protein BCG9842_B2659 of Bacillus cereus (strain G9842).